Consider the following 617-residue polypeptide: Protein AsmA (617 aa).

Over 1 to 3 (MRR) the chain is Cytoplasmic. A helical transmembrane segment spans residues 4-24 (FLTTLMILLVVLVAGLSALVL). At 25–617 (LVNPNDFRDY…KDVKKLLEKM (593 aa)) the chain is on the periplasmic side. Over residues 302-319 (TANGENGAAQQGQSQSTL) the composition is skewed to polar residues. Residues 302–321 (TANGENGAAQQGQSQSTLPR) form a disordered region.

The protein belongs to the AsmA family.

The protein resides in the cell inner membrane. In terms of biological role, could be involved in the assembly of outer membrane proteins. May indirectly influence the assembly of outer membrane proteins, potentially by altering outer membrane fluidity. Inhibits the assembly of mutant forms of outer membrane protein F (OmpF). The protein is Protein AsmA of Escherichia coli (strain K12).